We begin with the raw amino-acid sequence, 60 residues long: Small ribosomal subunit protein bS21 (60 aa).

A disordered region spans residues 35-60; the sequence is REHYEKPSVKRKKKSEAARRRKSKVR. A compositionally biased stretch (basic residues) spans 43 to 60; it reads VKRKKKSEAARRRKSKVR.

Belongs to the bacterial ribosomal protein bS21 family.

In Clostridium novyi (strain NT), this protein is Small ribosomal subunit protein bS21.